We begin with the raw amino-acid sequence, 542 residues long: Mitogen-activated protein kinase 14 (542 aa).

The 292-residue stretch at 13-304 (YKIEEVIGKG…AEEALADPYF (292 aa)) folds into the Protein kinase domain. Residues 19–27 (IGKGSYGVV) and Lys-42 contribute to the ATP site. The active-site Proton acceptor is Asp-139. Thr-175 is subject to Phosphothreonine. Residues 175 to 177 (TDY) carry the TXY motif. Position 177 is a phosphotyrosine (Tyr-177). Disordered regions lie at residues 388-412 (STAA…DNRP) and 482-542 (RNPA…SGHW). The span at 488–507 (PNSSVPLGSSYPRRNQTCKS) shows a compositional bias: polar residues.

This sequence belongs to the protein kinase superfamily. CMGC Ser/Thr protein kinase family. MAP kinase subfamily. In terms of processing, dually phosphorylated on Thr-175 and Tyr-177, which activates the enzyme.

It catalyses the reaction L-seryl-[protein] + ATP = O-phospho-L-seryl-[protein] + ADP + H(+). The enzyme catalyses L-threonyl-[protein] + ATP = O-phospho-L-threonyl-[protein] + ADP + H(+). Its activity is regulated as follows. Activated by threonine and tyrosine phosphorylation. The chain is Mitogen-activated protein kinase 14 (MPK14) from Oryza sativa subsp. japonica (Rice).